A 381-amino-acid polypeptide reads, in one-letter code: Chitin deacetylase 8 (381 aa).

Positions 1–18 (MKRLSVLCSLLLVAAALG) are cleaved as a signal peptide. Intrachain disulfides connect Cys27–Cys39 and Cys32–Cys37. 3 residues coordinate Zn(2+): Asp63, His117, and His121. Intrachain disulfides connect Cys86/Cys335, Cys211/Cys216, Cys240/Cys246, Cys343/Cys365, and Cys348/Cys368. An N-linked (GlcNAc...) asparagine glycan is attached at Asn171.

This sequence belongs to the carbohydrate esterase 4 (CE4) family. It depends on Zn(2+) as a cofactor. In terms of tissue distribution, strongly expressed in the midgut. Has little or no expression in other tissues tested.

It is found in the secreted. The enzyme catalyses [(1-&gt;4)-N-acetyl-beta-D-glucosaminyl](n) + n H2O = chitosan + n acetate. Its function is as follows. Hydrolyzes the N-acetamido groups of N-acetyl-D-glucosamine (GlcNAc) residues in chitin. Shows activity towards the chitinous oligomers GlcNAc(3), GlcNAc(4), GlcNAc(5) and GlcNAc(6), but not GlcNAc or GlcNAc(2). Requires the substrate to occupy subsites 0, +1, and +2 for optimum catalysis. This chain is Chitin deacetylase 8, found in Bombyx mori (Silk moth).